Consider the following 183-residue polypeptide: Transcription factor 15 (183 aa).

Positions 24 to 46 (DEENRSESDTSDQSYGCCEGAEA) are disordered. The region spanning 61 to 113 (KQRQAANARERDRTQSVNTAFTALRTLIPTEPVDRKLSKIETLRLASSYIAHL) is the bHLH domain.

In terms of assembly, heterodimer; efficient DNA binding requires dimerization with another bHLH protein.

The protein resides in the nucleus. Early transcription factor that plays a key role in somitogenesis, paraxial mesoderm development and regulation of stem cell pluripotency. Essential for the mesenchymal to epithelial transition associated with somite formation. Required for somite morphogenesis, thereby regulating patterning of the axial skeleton and skeletal muscles. Also plays a key role in regulation of stem cell pluripotency. Promotes pluripotency exit of embryonic stem cells (ESCs) by priming ESCs for differentiation. Acts as a key regulator of self-renewal of hematopoietic stem cells (HSCs) by mediating HSCs quiescence and long-term self-renewal. Acts by forming a heterodimer with another helix-loop-helix (bHLH) protein, that binds DNA on E-box motifs (5'-CANNTG-3') and activates transcription of target genes. This chain is Transcription factor 15 (TCF15), found in Gallus gallus (Chicken).